A 496-amino-acid chain; its full sequence is Xylulose kinase (496 aa).

83–84 (MH) provides a ligand contact to substrate. Residue aspartate 237 is the Proton acceptor of the active site.

Belongs to the FGGY kinase family.

The catalysed reaction is D-xylulose + ATP = D-xylulose 5-phosphate + ADP + H(+). In terms of biological role, catalyzes the phosphorylation of D-xylulose to D-xylulose 5-phosphate. The protein is Xylulose kinase of Staphylococcus epidermidis (strain ATCC 12228 / FDA PCI 1200).